Consider the following 118-residue polypeptide: Evasin P1080 (118 aa).

The signal sequence occupies residues 1–19; sequence FFQLAVFVVILFNINLLSA. 3 disulfide bridges follow: cysteine 41–cysteine 60, cysteine 45–cysteine 62, and cysteine 56–cysteine 73. An N-linked (GlcNAc...) asparagine glycan is attached at asparagine 44. 2 N-linked (GlcNAc...) asparagine glycosylation sites follow: asparagine 67 and asparagine 104.

The protein localises to the secreted. Functionally, salivary chemokine-binding protein which binds to host chemokines CXCL1, CXCL2, CXCL3, CXCL4, CXCL5, CXCL6, CXCL10, CXCL11 and CXCL13. The polypeptide is Evasin P1080 (Ixodes ricinus (Common tick)).